The primary structure comprises 307 residues: MNKGIMRPGHVQLRVLDMSKALEHYVELLGLIEMDRDDQGRVYLKAWTEVDKFSVVLRERDEPGMDFMGFKVVDEDALRQLERDLTAYGCAVEQLPAGELNSCGRRVRFQAPSGHHFELYADKEYTGKWGVNEVNPEAWPRDLKGMAAVRFDHCLLYGDELPATYDLFTKVLGFYLAEQVLDENGTRVAQFLSLSTKAHDVAFIHHPEKGRLHHVSFHLETWEDVLRAADLISMTDTSIDIGPTRHGLTHGKTIYFFDPSGNRSEVFCGGNYSYPDHKPVTWLAKDLGKAIFYHDRVLNERFMTVLT.

VOC domains are found at residues 7–122 (RPGH…LYAD) and 150–269 (RFDH…VFCG). Fe cation is bound by residues histidine 153, histidine 214, and glutamate 265.

This sequence belongs to the extradiol ring-cleavage dioxygenase family. As to quaternary structure, homotetramer. Fe(2+) serves as cofactor.

The catalysed reaction is catechol + O2 = (2Z,4E)-2-hydroxy-6-oxohexa-2,4-dienoate + H(+). The protein operates within xenobiotic degradation; toluene degradation. This chain is Metapyrocatechase (bztE), found in Pseudomonas aeruginosa.